The chain runs to 30 residues: Cyclotide hyen-G (30 aa).

Residues 1–30 (GLPCGESCVYIPCISTVLGCSCSNKVCYRD) constitute a cross-link (cyclopeptide (Gly-Asp)). Cystine bridges form between Cys-4-Cys-20, Cys-8-Cys-22, and Cys-13-Cys-27.

Post-translationally, this is a cyclic peptide. Detected in stems (at protein level).

In terms of biological role, probably participates in a plant defense mechanism. This chain is Cyclotide hyen-G, found in Pigea enneasperma (Spade flower).